The primary structure comprises 485 residues: UDP-N-acetylmuramate--L-alanine ligase (485 aa).

ATP is bound at residue G112–T118.

It belongs to the MurCDEF family.

The protein localises to the cytoplasm. The enzyme catalyses UDP-N-acetyl-alpha-D-muramate + L-alanine + ATP = UDP-N-acetyl-alpha-D-muramoyl-L-alanine + ADP + phosphate + H(+). It functions in the pathway cell wall biogenesis; peptidoglycan biosynthesis. Its function is as follows. Cell wall formation. This is UDP-N-acetylmuramate--L-alanine ligase from Variovorax paradoxus (strain S110).